A 357-amino-acid polypeptide reads, in one-letter code: Dihydroorotate dehydrogenase (quinone) (357 aa).

Residues 65-69 (AGLDK) and threonine 89 contribute to the FMN site. Lysine 69 is a binding site for substrate. Position 114–118 (114–118 (NRFGF)) interacts with substrate. FMN-binding residues include asparagine 156 and asparagine 189. Asparagine 189 is a binding site for substrate. Serine 192 serves as the catalytic Nucleophile. Asparagine 194 serves as a coordination point for substrate. FMN contacts are provided by lysine 234 and threonine 262. 263–264 (NT) is a substrate binding site. FMN contacts are provided by residues glycine 285, glycine 314, and 335–336 (YT).

This sequence belongs to the dihydroorotate dehydrogenase family. Type 2 subfamily. As to quaternary structure, monomer. Requires FMN as cofactor.

It localises to the cell membrane. It catalyses the reaction (S)-dihydroorotate + a quinone = orotate + a quinol. It functions in the pathway pyrimidine metabolism; UMP biosynthesis via de novo pathway; orotate from (S)-dihydroorotate (quinone route): step 1/1. Functionally, catalyzes the conversion of dihydroorotate to orotate with quinone as electron acceptor. This is Dihydroorotate dehydrogenase (quinone) from Albidiferax ferrireducens (strain ATCC BAA-621 / DSM 15236 / T118) (Rhodoferax ferrireducens).